We begin with the raw amino-acid sequence, 385 residues long: DNA replication and repair protein RecF (385 aa).

ATP is bound at residue 30 to 37 (GRNGQGKT).

This sequence belongs to the RecF family.

Its subcellular location is the cytoplasm. Functionally, the RecF protein is involved in DNA metabolism; it is required for DNA replication and normal SOS inducibility. RecF binds preferentially to single-stranded, linear DNA. It also seems to bind ATP. This chain is DNA replication and repair protein RecF, found in Leifsonia xyli subsp. xyli (strain CTCB07).